A 106-amino-acid chain; its full sequence is UPF0145 protein CPE0882 (106 aa).

Belongs to the UPF0145 family.

The chain is UPF0145 protein CPE0882 from Clostridium perfringens (strain 13 / Type A).